Here is a 493-residue protein sequence, read N- to C-terminus: NAD(P)H-quinone oxidoreductase chain 4, chloroplastic (493 aa).

The next 14 helical transmembrane spans lie at 4–24, 34–54, 87–107, 111–131, 134–154, 167–187, 212–232, 242–262, 276–296, 313–333, 334–354, 385–405, 417–437, and 462–482; these read FPWL…IPLL, WYTL…FGYY, MGLI…AWPI, PKLF…LFTS, LFLF…LISL, FIFY…TVCF, ILYL…PFHT, HYST…YGWI, FAPW…SVCL, MGFV…GAIC, QMIS…TTYD, SLAL…LGII, FIIL…LSML, and VFII…PNIL.

It belongs to the complex I subunit 4 family.

The protein resides in the plastid. Its subcellular location is the chloroplast thylakoid membrane. It carries out the reaction a plastoquinone + NADH + (n+1) H(+)(in) = a plastoquinol + NAD(+) + n H(+)(out). It catalyses the reaction a plastoquinone + NADPH + (n+1) H(+)(in) = a plastoquinol + NADP(+) + n H(+)(out). The polypeptide is NAD(P)H-quinone oxidoreductase chain 4, chloroplastic (Chara vulgaris (Common stonewort)).